Reading from the N-terminus, the 218-residue chain is tRNA (guanine-N(7)-)-methyltransferase (218 aa).

The disordered stretch occupies residues 1 to 25 (MRLKNKPWANELVEEHPESALDRPN). The span at 13–25 (VEEHPESALDRPN) shows a compositional bias: basic and acidic residues. Residues Glu45, Glu70, Asp97, and Asp119 each coordinate S-adenosyl-L-methionine. Asp119 is a catalytic residue. Residue Lys123 participates in substrate binding. Residues 125–130 (RHEKRR) form an interaction with RNA region. Substrate-binding positions include Asp155 and 195–198 (TEYE).

Belongs to the class I-like SAM-binding methyltransferase superfamily. TrmB family.

It catalyses the reaction guanosine(46) in tRNA + S-adenosyl-L-methionine = N(7)-methylguanosine(46) in tRNA + S-adenosyl-L-homocysteine. It functions in the pathway tRNA modification; N(7)-methylguanine-tRNA biosynthesis. Functionally, catalyzes the formation of N(7)-methylguanine at position 46 (m7G46) in tRNA. The protein is tRNA (guanine-N(7)-)-methyltransferase of Lactobacillus delbrueckii subsp. bulgaricus (strain ATCC BAA-365 / Lb-18).